The following is a 744-amino-acid chain: Elongation factor G, mitochondrial (744 aa).

The N-terminal 25 residues, 1-25, are a transit peptide targeting the mitochondrion; sequence MTISCLLRIRPALAKSFFENGQRAF. Positions 38 to 315 constitute a tr-type G domain; sequence ERIRNIGISA…AVLDYLPNPG (278 aa). Residues 47-54, 114-118, and 168-171 each bind GTP; these read AHIDSGKT, DTPGH, and NKLD.

It belongs to the TRAFAC class translation factor GTPase superfamily. Classic translation factor GTPase family. EF-G/EF-2 subfamily.

The protein resides in the mitochondrion. The protein operates within protein biosynthesis; polypeptide chain elongation. Its function is as follows. Mitochondrial GTPase that catalyzes the GTP-dependent ribosomal translocation step during translation elongation. During this step, the ribosome changes from the pre-translocational (PRE) to the post-translocational (POST) state as the newly formed A-site-bound peptidyl-tRNA and P-site-bound deacylated tRNA move to the P and E sites, respectively. Catalyzes the coordinated movement of the two tRNA molecules, the mRNA and conformational changes in the ribosome. The chain is Elongation factor G, mitochondrial from Culex quinquefasciatus (Southern house mosquito).